A 133-amino-acid polypeptide reads, in one-letter code: Glycine cleavage system H protein (133 aa).

Residues 24-106 (IATIGISAYA…YGDGWLLKVR (83 aa)) form the Lipoyl-binding domain. Lys-65 carries the post-translational modification N6-lipoyllysine.

The protein belongs to the GcvH family. In terms of assembly, the glycine cleavage system is composed of four proteins: P, T, L and H. Requires (R)-lipoate as cofactor.

The glycine cleavage system catalyzes the degradation of glycine. The H protein shuttles the methylamine group of glycine from the P protein to the T protein. The protein is Glycine cleavage system H protein of Crocosphaera subtropica (strain ATCC 51142 / BH68) (Cyanothece sp. (strain ATCC 51142)).